The following is a 137-amino-acid chain: ATP synthase epsilon chain (137 aa).

The protein belongs to the ATPase epsilon chain family. F-type ATPases have 2 components, CF(1) - the catalytic core - and CF(0) - the membrane proton channel. CF(1) has five subunits: alpha(3), beta(3), gamma(1), delta(1), epsilon(1). CF(0) has three main subunits: a, b and c.

It is found in the cell membrane. Functionally, produces ATP from ADP in the presence of a proton gradient across the membrane. The sequence is that of ATP synthase epsilon chain from Mycoplasmopsis synoviae (strain 53) (Mycoplasma synoviae).